Here is a 100-residue protein sequence, read N- to C-terminus: Urease subunit gamma (100 aa).

The protein belongs to the urease gamma subunit family. Heterotrimer of UreA (gamma), UreB (beta) and UreC (alpha) subunits. Three heterotrimers associate to form the active enzyme.

The protein localises to the cytoplasm. The catalysed reaction is urea + 2 H2O + H(+) = hydrogencarbonate + 2 NH4(+). The protein operates within nitrogen metabolism; urea degradation; CO(2) and NH(3) from urea (urease route): step 1/1. The sequence is that of Urease subunit gamma from Tolumonas auensis (strain DSM 9187 / NBRC 110442 / TA 4).